The sequence spans 344 residues: MRNMITMGEFIVKKQADYPTATGELTSLLSSIRLAAKVVNREINKAGLADIIGSMGAENVQGEVQQKLDVYANERFKAALEARGEVCGMASEEEEDFVSFDSELSRHSKYVVLIDPLDGSSNIDVNVSVGTIFSIYRRVSKPGAGVTLEDFLQPGNRQVAAGYVVYGSSTMLVYTTGFGVNGFTYDPSIGCFCLSHENIRIPEEGKIYSINEGNYIKFPDGVKKYLKYCQERDEATHRPYTSRYIGSLVSDFHRNLLKGGIYIYPSGTNSPNGKLRLLYECNPMAFLVEQAGGKASDGFGRIMDIQPTALHQRTPYFVGSTKMVDRAEAFMREFSSHEDPANQG.

Positions 92, 115, 117, and 118 each coordinate Mg(2+). Substrate contacts are provided by residues 118–121 (DGSS), Asn-211, Tyr-244, and Lys-274. Position 280 (Glu-280) interacts with Mg(2+).

This sequence belongs to the FBPase class 1 family. In terms of assembly, homotetramer. Requires Mg(2+) as cofactor.

It is found in the cytoplasm. It carries out the reaction beta-D-fructose 1,6-bisphosphate + H2O = beta-D-fructose 6-phosphate + phosphate. It functions in the pathway carbohydrate biosynthesis; gluconeogenesis. In Aeromonas hydrophila subsp. hydrophila (strain ATCC 7966 / DSM 30187 / BCRC 13018 / CCUG 14551 / JCM 1027 / KCTC 2358 / NCIMB 9240 / NCTC 8049), this protein is Fructose-1,6-bisphosphatase class 1.